The primary structure comprises 341 residues: L-threonine 3-dehydrogenase (341 aa).

Cys38 contributes to the Zn(2+) binding site. Catalysis depends on charge relay system residues Thr40 and His43. Zn(2+)-binding residues include His63, Glu64, Cys93, Cys96, Cys99, and Cys107. NAD(+) contacts are provided by residues Ile175, Asp195, Arg200, 262-264, and 286-287; these read LGI and IY.

It belongs to the zinc-containing alcohol dehydrogenase family. Homotetramer. It depends on Zn(2+) as a cofactor.

The protein resides in the cytoplasm. The enzyme catalyses L-threonine + NAD(+) = (2S)-2-amino-3-oxobutanoate + NADH + H(+). The protein operates within amino-acid degradation; L-threonine degradation via oxydo-reductase pathway; glycine from L-threonine: step 1/2. Its function is as follows. Catalyzes the NAD(+)-dependent oxidation of L-threonine to 2-amino-3-ketobutyrate. The polypeptide is L-threonine 3-dehydrogenase (Shewanella sp. (strain MR-7)).